Reading from the N-terminus, the 375-residue chain is NADH-ubiquinone oxidoreductase 40 kDa subunit, mitochondrial (375 aa).

Residues 1 to 26 (MAPLTAAMRSTPRIIVSNAFGFQRRA) constitute a mitochondrion transit peptide.

It belongs to the complex I NDUFA9 subunit family. As to quaternary structure, complex I is composed of about 40 different subunits. It depends on FAD as a cofactor.

The protein resides in the mitochondrion matrix. Functionally, accessory subunit of the mitochondrial membrane respiratory chain NADH dehydrogenase (Complex I), that is believed not to be involved in catalysis. Complex I functions in the transfer of electrons from NADH to the respiratory chain. The immediate electron acceptor for the enzyme is believed to be ubiquinone. The chain is NADH-ubiquinone oxidoreductase 40 kDa subunit, mitochondrial (nuo40) from Neurospora crassa (strain ATCC 24698 / 74-OR23-1A / CBS 708.71 / DSM 1257 / FGSC 987).